We begin with the raw amino-acid sequence, 373 residues long: Anhydro-N-acetylmuramic acid kinase (373 aa).

Residue Gly12 to Asp19 participates in ATP binding.

Belongs to the anhydro-N-acetylmuramic acid kinase family.

The catalysed reaction is 1,6-anhydro-N-acetyl-beta-muramate + ATP + H2O = N-acetyl-D-muramate 6-phosphate + ADP + H(+). It participates in amino-sugar metabolism; 1,6-anhydro-N-acetylmuramate degradation. The protein operates within cell wall biogenesis; peptidoglycan recycling. Functionally, catalyzes the specific phosphorylation of 1,6-anhydro-N-acetylmuramic acid (anhMurNAc) with the simultaneous cleavage of the 1,6-anhydro ring, generating MurNAc-6-P. Is required for the utilization of anhMurNAc either imported from the medium or derived from its own cell wall murein, and thus plays a role in cell wall recycling. This chain is Anhydro-N-acetylmuramic acid kinase, found in Erwinia tasmaniensis (strain DSM 17950 / CFBP 7177 / CIP 109463 / NCPPB 4357 / Et1/99).